The primary structure comprises 274 residues: UPF0173 metal-dependent hydrolase A2cp1_1196 (274 aa).

It belongs to the UPF0173 family.

The protein is UPF0173 metal-dependent hydrolase A2cp1_1196 of Anaeromyxobacter dehalogenans (strain 2CP-1 / ATCC BAA-258).